The chain runs to 484 residues: MKFIVKLFPEIMMKSRPVRNRFSKILQGNIRNVLTRHDEQVKVILEWDKIIVRTENESAENKANLILLLSSTPGIAHFLEVTESVYTDLHDVYEQTLAMVGDSLDGKTFCVRIKRIGKHDFSSIDAERYVGGGLNQHTDTLGVKLKGPEITINLEINNEKLFFIDKKHPGLGGFPLGTQESVLSLISGGFDSGVSSYKLIKRGSRVHYCFFNLGGGAHEIGVKQVAYQLWNRFGSSHRVKFISIPFEPVVAEILEKVENGQMGVVLKRMMMRAATLMAERLGVEALITGEALGQVSSQTLRNLSVIDKVSDMLILRPLIATDKQDIVDCARVIGTAEISETIPEYCGVISQRPTVKAVMRKIEKQEEKFDLSLIEQVVNQAPTIDIRDIAKAVHKEILEVESVSQFAENEIVLDIRSLDEAEESPLDIEGVTIEHLPFFKLSNQFETLPQDKIYLLYCARGVMSKLQALYLKESGFDNVKVYRP.

The THUMP domain maps to 63 to 167; it reads ANLILLLSST…NEKLFFIDKK (105 aa). ATP contacts are provided by residues 185–186, lysine 267, glycine 289, and glutamine 298; that span reads LI. A disulfide bridge links cysteine 346 with cysteine 458. The Rhodanese domain occupies 406–484; it reads FAENEIVLDI…GFDNVKVYRP (79 aa). The active-site Cysteine persulfide intermediate is the cysteine 458.

The protein belongs to the ThiI family.

It is found in the cytoplasm. The catalysed reaction is [ThiI sulfur-carrier protein]-S-sulfanyl-L-cysteine + a uridine in tRNA + 2 reduced [2Fe-2S]-[ferredoxin] + ATP + H(+) = [ThiI sulfur-carrier protein]-L-cysteine + a 4-thiouridine in tRNA + 2 oxidized [2Fe-2S]-[ferredoxin] + AMP + diphosphate. It carries out the reaction [ThiS sulfur-carrier protein]-C-terminal Gly-Gly-AMP + S-sulfanyl-L-cysteinyl-[cysteine desulfurase] + AH2 = [ThiS sulfur-carrier protein]-C-terminal-Gly-aminoethanethioate + L-cysteinyl-[cysteine desulfurase] + A + AMP + 2 H(+). The protein operates within cofactor biosynthesis; thiamine diphosphate biosynthesis. In terms of biological role, catalyzes the ATP-dependent transfer of a sulfur to tRNA to produce 4-thiouridine in position 8 of tRNAs, which functions as a near-UV photosensor. Also catalyzes the transfer of sulfur to the sulfur carrier protein ThiS, forming ThiS-thiocarboxylate. This is a step in the synthesis of thiazole, in the thiamine biosynthesis pathway. The sulfur is donated as persulfide by IscS. The sequence is that of tRNA sulfurtransferase from Psychromonas ingrahamii (strain DSM 17664 / CCUG 51855 / 37).